Reading from the N-terminus, the 158-residue chain is GTP-dependent dephospho-CoA kinase (158 aa).

GTP-binding residues include aspartate 35, isoleucine 36, valine 37, aspartate 54, lysine 56, glutamate 109, and aspartate 132.

This sequence belongs to the GTP-dependent DPCK family.

The catalysed reaction is 3'-dephospho-CoA + GTP = GDP + CoA + H(+). It participates in cofactor biosynthesis; coenzyme A biosynthesis. Functionally, catalyzes the GTP-dependent phosphorylation of the 3'-hydroxyl group of dephosphocoenzyme A to form coenzyme A (CoA). This Methanocaldococcus jannaschii (strain ATCC 43067 / DSM 2661 / JAL-1 / JCM 10045 / NBRC 100440) (Methanococcus jannaschii) protein is GTP-dependent dephospho-CoA kinase.